A 237-amino-acid chain; its full sequence is Peptidase E (237 aa).

Residues Ser-122, Asp-137, and His-159 each act as charge relay system in the active site.

The protein belongs to the peptidase S51 family.

The protein resides in the cytoplasm. The catalysed reaction is Dipeptidase E catalyzes the hydrolysis of dipeptides Asp-|-Xaa. It does not act on peptides with N-terminal Glu, Asn or Gln, nor does it cleave isoaspartyl peptides.. Hydrolyzes dipeptides containing N-terminal aspartate residues. May play a role in allowing the cell to use peptide aspartate to spare carbon otherwise required for the synthesis of the aspartate family of amino acids. This Shewanella baltica (strain OS155 / ATCC BAA-1091) protein is Peptidase E.